Reading from the N-terminus, the 206-residue chain is Small ribosomal subunit protein uS4 (206 aa).

Positions 96–156 (GRLDNVVYRM…EKAKKQSRVK (61 aa)) constitute an S4 RNA-binding domain.

Belongs to the universal ribosomal protein uS4 family. Part of the 30S ribosomal subunit. Contacts protein S5. The interaction surface between S4 and S5 is involved in control of translational fidelity.

Functionally, one of the primary rRNA binding proteins, it binds directly to 16S rRNA where it nucleates assembly of the body of the 30S subunit. With S5 and S12 plays an important role in translational accuracy. The sequence is that of Small ribosomal subunit protein uS4 from Escherichia fergusonii (strain ATCC 35469 / DSM 13698 / CCUG 18766 / IAM 14443 / JCM 21226 / LMG 7866 / NBRC 102419 / NCTC 12128 / CDC 0568-73).